The primary structure comprises 425 residues: Pleckstrin homology domain-containing family A member 2 (425 aa).

A PH 1 domain is found at 7–113; it reads QNRICGFLDI…WVEALNQASK (107 aa). Residue Lys141 forms a Glycyl lysine isopeptide (Lys-Gly) (interchain with G-Cter in SUMO2) linkage. A Phosphoserine modification is found at Ser184. Residues 198–298 enclose the PH 2 domain; that stretch reads PLIKSGYCVK…WIKEIGAAVQ (101 aa). 2 positions are modified to phosphoserine: Ser314 and Ser349. Residues 374-410 are disordered; sequence AEDSLFTPRLGESSTSAVLPSSRIRHRSEPQHPKEKP. A compositionally biased stretch (basic and acidic residues) spans 400–410; sequence RSEPQHPKEKP.

In terms of assembly, binds MPDZ and PTPN13.

Its subcellular location is the cytoplasm. The protein localises to the cell membrane. The protein resides in the nucleus. In terms of biological role, binds specifically to phosphatidylinositol 3,4-diphosphate (PtdIns3,4P2), but not to other phosphoinositides. May recruit other proteins to the plasma membrane. This Bos taurus (Bovine) protein is Pleckstrin homology domain-containing family A member 2 (PLEKHA2).